The sequence spans 793 residues: Netrin-B (793 aa).

The N-terminal stretch at 1-22 (MVRATGTRMGLLLPIILALAIG) is a signal peptide. The region spanning 39-303 (KPRKCLPSFV…NLQDNDSADA (265 aa)) is the Laminin N-terminal domain. N-linked (GlcNAc...) asparagine glycans are attached at residues asparagine 103, asparagine 125, and asparagine 298. Residues 332 to 378 (SVVKRQGKHKGSAYEKHYQSKLAATTPPQQPPKVTPPGKVTPPSTAA) are disordered. Positions 367–378 (PPGKVTPPSTAA) are enriched in low complexity. Intrachain disulfides connect cysteine 405–cysteine 414, cysteine 407–cysteine 461, cysteine 463–cysteine 472, cysteine 475–cysteine 495, cysteine 498–cysteine 507, cysteine 500–cysteine 525, cysteine 528–cysteine 537, cysteine 540–cysteine 558, cysteine 561–cysteine 573, cysteine 563–cysteine 580, cysteine 582–cysteine 591, cysteine 594–cysteine 608, cysteine 649–cysteine 738, cysteine 652–cysteine 740, and cysteine 665–cysteine 792. Laminin EGF-like domains are found at residues 405-497 (CKCN…ECKM), 498-560 (CQCN…VCKR), and 561-610 (CDCH…PCIK). Residues 420–446 (SGSGTALSDQDDGQDEDTPSAPSLANH) are disordered. Residues 428 to 437 (DQDDGQDEDT) show a composition bias toward acidic residues. In terms of domain architecture, NTR spans 649–792 (CGKCKASPKK…KRFQRRARKC (144 aa)). The N-linked (GlcNAc...) asparagine glycan is linked to asparagine 746.

Binds to unc-5 and fra receptors. At 24 hr after puparium formation (APF), detected in the most anterior (oldest) L3, L4 and L5 lamina neurons (at protein level). At 48 hr APF, expressed in all L3, L4 and L5 neurons with slightly higher expression in the L3 neurons (at protein level). At the midline of developing CNS and in different subsets of neurons, muscles, and epidermal patches.

Its subcellular location is the secreted. It localises to the extracellular space. It is found in the extracellular matrix. The protein resides in the cytoplasm. The protein localises to the perinuclear region. Netrins control guidance of CNS commissural axons and peripheral motor axons. Its association with either fra or unc-5 receptors will lead to axon attraction or repulsion, respectively. While short-range repulsion requires both fra and unc-5 receptors, long-range repulsion only requires unc-5. This Drosophila melanogaster (Fruit fly) protein is Netrin-B (NetB).